Here is a 590-residue protein sequence, read N- to C-terminus: V-type ATP synthase alpha chain (590 aa).

G232–T239 contacts ATP.

This sequence belongs to the ATPase alpha/beta chains family.

It carries out the reaction ATP + H2O + 4 H(+)(in) = ADP + phosphate + 5 H(+)(out). Its function is as follows. Produces ATP from ADP in the presence of a proton gradient across the membrane. The V-type alpha chain is a catalytic subunit. The sequence is that of V-type ATP synthase alpha chain from Thermoanaerobacter pseudethanolicus (strain ATCC 33223 / 39E) (Clostridium thermohydrosulfuricum).